We begin with the raw amino-acid sequence, 229 residues long: Ribonuclease 3 (229 aa).

Residues 7 to 132 (LKAFEGRIGH…VIAAVYLDAG (126 aa)) form the RNase III domain. E45 lines the Mg(2+) pocket. D49 is an active-site residue. Residues D118 and E121 each coordinate Mg(2+). Residue E121 is part of the active site. The 70-residue stretch at 157 to 226 (DAKTALQEWA…ARALLARMEA (70 aa)) folds into the DRBM domain.

Belongs to the ribonuclease III family. In terms of assembly, homodimer. Mg(2+) serves as cofactor.

It localises to the cytoplasm. It carries out the reaction Endonucleolytic cleavage to 5'-phosphomonoester.. Functionally, digests double-stranded RNA. Involved in the processing of primary rRNA transcript to yield the immediate precursors to the large and small rRNAs (23S and 16S). Processes some mRNAs, and tRNAs when they are encoded in the rRNA operon. Processes pre-crRNA and tracrRNA of type II CRISPR loci if present in the organism. This Cereibacter sphaeroides (strain ATCC 17029 / ATH 2.4.9) (Rhodobacter sphaeroides) protein is Ribonuclease 3.